Here is a 552-residue protein sequence, read N- to C-terminus: Berberine bridge enzyme-like 6 (552 aa).

Positions 1–16 are cleaved as a signal peptide; the sequence is MKEAFVFLLCLTNKFP. Residues Cys56 and Cys119 are joined by a disulfide bond. Asn76, Asn161, Asn280, Asn364, Asn419, and Asn463 each carry an N-linked (GlcNAc...) asparagine glycan. In terms of domain architecture, FAD-binding PCMH-type spans 93–270; the sequence is FSSPNFKKLL…LSWKINLVEV (178 aa). A cross-link (6-(S-cysteinyl)-8alpha-(pros-histidyl)-FAD (His-Cys)) is located at residues 134 to 196; the sequence is HDNEGFSYMS…QTLAFPAGVC (63 aa).

This sequence belongs to the oxygen-dependent FAD-linked oxidoreductase family. It depends on FAD as a cofactor. Post-translationally, the FAD cofactor is bound via a bicovalent 6-S-cysteinyl, 8alpha-N1-histidyl FAD linkage.

The protein resides in the secreted. It is found in the cell wall. Functionally, probable flavin-dependent oxidoreductase. This chain is Berberine bridge enzyme-like 6, found in Arabidopsis thaliana (Mouse-ear cress).